The chain runs to 370 residues: Gametogenetin-binding protein 1 (370 aa).

Disordered regions lie at residues 26-114 and 240-263; these read VGSK…QTLT and PAAP…EEAV. A compositionally biased stretch (polar residues) spans 31 to 49; it reads GSKSTNKPLTRSQPSSSWE. The segment at 225-370 is required for induction of mitochondrial fragmentation; that stretch reads LYKQLQKSAM…DEMGNWPPPD (146 aa). The segment covering 250 to 260 has biased composition (basic and acidic residues); it reads GLPHEEKGERE. The tract at residues 298 to 370 is interaction with GGN; that stretch reads KKFRSTDTVG…DEMGNWPPPD (73 aa).

In terms of assembly, interacts with CCDC159. Interacts with isoform 1 and isoform 2 of GGN. In terms of tissue distribution, testis-specific. In the testis, expressed only in germ cells and not in somatic cells. Expression starts in late primary spermatocytes in stage X-XII tubules and gradually increases towards step 1-3 spermatids in stage I-III tubules. Expression then declines continuously and disappears after step 7 spermatids in stage VII tubules (at protein level).

The protein localises to the cytoplasm. It localises to the membrane. Its subcellular location is the golgi apparatus. It is found in the mitochondrion intermembrane space. In terms of biological role, induces mitochondrial fragmentation, possibly by promoting DNM1L-dependent fission and may play a role in mitochondrial morphogenesis during spermatogenesis. The chain is Gametogenetin-binding protein 1 (Ggnbp1) from Mus musculus (Mouse).